Here is a 1898-residue protein sequence, read N- to C-terminus: Protein NYNRIN (1898 aa).

Disordered regions lie at residues 289–315, 424–450, 467–533, 618–691, and 711–731; these read SNNQ…STNH, LPSA…CPRP, DVKD…TDQS, EPTT…TDAG, and VSLL…SGTL. The segment covering 618-627 has biased composition (polar residues); sequence EPTTPKTPQA. Low complexity predominate over residues 649–672; it reads PAATVSKAPAASKAPAAPKVPVTP. In terms of domain architecture, RNase NYN spans 792-942; the sequence is LRRVVIDGSS…LGRDGPTLDE (151 aa). The tract at residues 968 to 1019 is disordered; it reads SASVTELSDDADSGPLESLPNMEEVREEKEERQDEEQRQGQGTQKAAEEDDL. Residues 990–1005 are compositionally biased toward basic and acidic residues; the sequence is EEVREEKEERQDEEQR. The region spanning 1304 to 1450 is the RNase H type-1 domain; that stretch reads LSTFVCIHMS…VDTLAKQGAQ (147 aa). 2 helical membrane passes run 1372-1392 and 1408-1428; these read VVFL…LPLW and PSLL…PFIY. An Integrase catalytic domain is found at 1609 to 1774; the sequence is RSTAPWSNLQ…ESRLTEPLWW (166 aa).

It is found in the membrane. This chain is Protein NYNRIN (NYNRIN), found in Homo sapiens (Human).